A 336-amino-acid chain; its full sequence is Fructose-1,6-bisphosphatase class 1 (336 aa).

Mg(2+)-binding residues include E90, D112, L114, and D115. Substrate-binding positions include 115–118 (DGSS), N207, and K273. Mg(2+) is bound at residue E279.

It belongs to the FBPase class 1 family. In terms of assembly, homotetramer. The cofactor is Mg(2+).

The protein resides in the cytoplasm. It carries out the reaction beta-D-fructose 1,6-bisphosphate + H2O = beta-D-fructose 6-phosphate + phosphate. It functions in the pathway carbohydrate biosynthesis; gluconeogenesis. This chain is Fructose-1,6-bisphosphatase class 1, found in Xanthomonas oryzae pv. oryzae (strain PXO99A).